Reading from the N-terminus, the 957-residue chain is Glycine dehydrogenase (decarboxylating) (957 aa).

Lysine 702 carries the N6-(pyridoxal phosphate)lysine modification.

It belongs to the GcvP family. In terms of assembly, the glycine cleavage system is composed of four proteins: P, T, L and H. It depends on pyridoxal 5'-phosphate as a cofactor.

The catalysed reaction is N(6)-[(R)-lipoyl]-L-lysyl-[glycine-cleavage complex H protein] + glycine + H(+) = N(6)-[(R)-S(8)-aminomethyldihydrolipoyl]-L-lysyl-[glycine-cleavage complex H protein] + CO2. The glycine cleavage system catalyzes the degradation of glycine. The P protein binds the alpha-amino group of glycine through its pyridoxal phosphate cofactor; CO(2) is released and the remaining methylamine moiety is then transferred to the lipoamide cofactor of the H protein. This is Glycine dehydrogenase (decarboxylating) from Synechococcus sp. (strain RCC307).